The sequence spans 285 residues: HTH-type transcriptional regulator MurR (285 aa).

Residues 1-77 enclose the HTH rpiR-type domain; sequence MLYLTKISNA…MALIGEYSAS (77 aa). The segment at residues 37–56 is a DNA-binding region (H-T-H motif); the sequence is SRQMAKQLGISQSSIVKFAQ. The SIS domain occupies 128-268; the sequence is IIEVISKAPF…FVGLVQLNDV (141 aa).

Homotetramer.

It participates in amino-sugar metabolism; N-acetylmuramate degradation [regulation]. Functionally, represses the expression of the murPQ operon involved in the uptake and degradation of N-acetylmuramic acid (MurNAc). Binds to two adjacent inverted repeats within the operator region. MurNAc 6-phosphate, the substrate of MurQ, is the specific inducer that weakens binding of MurR to the operator. The polypeptide is HTH-type transcriptional regulator MurR (Escherichia coli (strain K12 / MC4100 / BW2952)).